Reading from the N-terminus, the 82-residue chain is MVTIRLARHGAKKRPFYQVVVTDSRNARNGRFIERVGFFNPIASGAEEETRLDLDRIAHWVGLGATVSDRVAALIKAANKAA.

The protein belongs to the bacterial ribosomal protein bS16 family.

This Klebsiella pneumoniae (strain 342) protein is Small ribosomal subunit protein bS16.